The following is a 438-amino-acid chain: Flotillin-2 (438 aa).

This sequence belongs to the band 7/mec-2 family. Flotillin subfamily. As to quaternary structure, heterooligomeric complex of flotillins 1 and 2.

Its subcellular location is the membrane. Functionally, may play a role in axon growth and regeneration. May be involved in epidermal cell adhesion and epidermal structure and function. The sequence is that of Flotillin-2 from Drosophila melanogaster (Fruit fly).